The following is a 68-amino-acid chain: Dermaseptin-H5 (68 aa).

The first 17 residues, 1–17, serve as a signal peptide directing secretion; that stretch reads KSLFLVLFLGMVSLSIC. A propeptide spanning residues 18–38 is cleaved from the precursor; sequence EEEKRENEDEEKQEDDEQSEM. Residues 19–40 form a disordered region; that stretch reads EEKRENEDEEKQEDDEQSEMKR. The span at 25–35 shows a compositional bias: acidic residues; that stretch reads EDEEKQEDDEQ. Position 65 is a leucine amide (L65). A propeptide spanning residues 67-68 is cleaved from the precursor; it reads EQ.

Expressed by the skin glands.

It is found in the secreted. In terms of biological role, has antibacterial activity against the Gram-negative bacteria E.coli ATCC 11775 (MIC=0.5 uM), and the Gram-positive bacteria S.aureus ATCC 12600 (MIC=0.5 uM) and M.luteus ATCC 49732 (MIC=2.0 uM). Does not inhibit the growth of the fungus C.albicans. Probably acts by disturbing membrane functions with its amphipathic structure. In Pithecopus azureus (Orange-legged monkey tree frog), this protein is Dermaseptin-H5.